The following is a 257-amino-acid chain: Hydroxyethylthiazole kinase (257 aa).

M42 is a substrate binding site. Positions 117 and 163 each coordinate ATP. A190 is a binding site for substrate.

It belongs to the Thz kinase family. Mg(2+) is required as a cofactor.

It catalyses the reaction 5-(2-hydroxyethyl)-4-methylthiazole + ATP = 4-methyl-5-(2-phosphooxyethyl)-thiazole + ADP + H(+). It participates in cofactor biosynthesis; thiamine diphosphate biosynthesis; 4-methyl-5-(2-phosphoethyl)-thiazole from 5-(2-hydroxyethyl)-4-methylthiazole: step 1/1. Its function is as follows. Catalyzes the phosphorylation of the hydroxyl group of 4-methyl-5-beta-hydroxyethylthiazole (THZ). This chain is Hydroxyethylthiazole kinase, found in Roseobacter denitrificans (strain ATCC 33942 / OCh 114) (Erythrobacter sp. (strain OCh 114)).